Reading from the N-terminus, the 343-residue chain is Galactoside alpha-(1,2)-fucosyltransferase 2 (343 aa).

Over 1–14 (MLVVQMPFSFPVAH) the chain is Cytoplasmic. Residues 15–28 (FILFVFTVSTIFHI) form a helical; Signal-anchor for type II membrane protein membrane-spanning segment. The Lumenal segment spans residues 29 to 343 (QQRLAKIQAM…AADLSPLLKH (315 aa)). Residues Asn-188, Asn-282, and Asn-308 are each glycosylated (N-linked (GlcNAc...) asparagine).

This sequence belongs to the glycosyltransferase 11 family.

Its subcellular location is the golgi apparatus. It is found in the golgi stack membrane. The catalysed reaction is a beta-D-galactosyl-(1-&gt;3)-N-acetyl-beta-D-glucosaminyl derivative + GDP-beta-L-fucose = an alpha-L-Fuc-(1-&gt;2)-beta-D-Gal-(1-&gt;3)-beta-D-GlcNAc derivative + GDP + H(+). It carries out the reaction a beta-D-galactosyl-(1-&gt;4)-N-acetyl-beta-D-glucosaminyl derivative + GDP-beta-L-fucose = an alpha-L-Fuc-(1-&gt;2)-beta-D-Gal-(1-&gt;4)-beta-D-GlcNAc derivative + GDP + H(+). It catalyses the reaction a neolactoside nLc4Cer + GDP-beta-L-fucose = a neolactoside IV(2)-alpha-Fuc-nLc4Cer + GDP + H(+). The enzyme catalyses a neolactoside nLc4Cer(d18:1(4E)) + GDP-beta-L-fucose = a neolactoside IV(2)-alpha-Fuc-nLc4Cer(d18:1(4E)) + GDP + H(+). The catalysed reaction is a ganglioside GM1 + GDP-beta-L-fucose = a ganglioside Fuc-GM1 + GDP + H(+). It carries out the reaction a ganglioside GA1 + GDP-beta-L-fucose = a ganglioside Fuc-GA1 + GDP + H(+). It catalyses the reaction Lc4Cer + GDP-beta-L-fucose = alpha-L-fucosyl-(1-&gt;2)-beta-D-galactosyl-(1-&gt;3)-N-acetyl-beta-D-glucosaminyl-(1-&gt;3)-beta-D-galactosyl-(1-&gt;4)-beta-D-glucosyl-(1&lt;-&gt;1')-ceramide + GDP + H(+). The enzyme catalyses a beta-D-Gal-(1-&gt;3)-beta-D-GlcNAc-(1-&gt;3)-beta-D-Gal-(1-&gt;4)-beta-D-Glc-(1&lt;-&gt;1')-Cer(d18:1(4E)) + GDP-beta-L-fucose = alpha-L-fucosyl-(1-&gt;2)- beta-D-galactosyl-(1-&gt;3)-N-acetyl-beta-D-glucosaminyl-(1-&gt;3)-beta-D-galactosyl-(1-&gt;4)-beta-D-glucosyl-(1&lt;-&gt;1')-N-acylsphing-4-enine + GDP + H(+). The catalysed reaction is a ganglioside GD1b + GDP-beta-L-fucose = a ganglioside Fuc-GD1b + GDP + H(+). It carries out the reaction a ganglioside GM1 (d18:1(4E)) + GDP-beta-L-fucose = a ganglioside Fuc-GM1 (d18:1(4E)) + GDP + H(+). It catalyses the reaction a globoside GalGb4Cer (d18:1(4E)) + GDP-beta-L-fucose = a globoside Globo-H (d18:1(4E)) + GDP + H(+). The enzyme catalyses a lactoside III(4)-a-Fuc-Lc4Cer + GDP-beta-L-fucose = a lactoside IV(2),III(4)-a-[Fuc]2-Lc4Cer + GDP + H(+). The catalysed reaction is beta-D-galactosyl-(1-&gt;3)-N-acetyl-D-galactosamine + GDP-beta-L-fucose = alpha-L-fucosyl-(1-&gt;2)-beta-D-galactosyl-(1-&gt;3)-N-acetyl-D-galactosamine + GDP + H(+). It participates in protein modification; protein glycosylation. In terms of biological role, catalyzes the transfer of L-fucose, from a guanosine diphosphate-beta-L-fucose, to the terminal galactose on both O- and N-linked glycans chains of cell surface glycoproteins and glycolipids and the resulting epitope regulates several processes such as cell-cell interaction including host-microbe interaction, cell surface expression and cell proliferation. Preferentially fucosylates gangliosides GA1 and GM1 in the antrum, cecum and colon and in the female reproductive organs. Fucosylated host glycoproteins or glycolipids mediate interaction with intestinal microbiota influencing its composition. Creates a soluble precursor oligosaccharide FuC-alpha ((1,2)Galbeta-) called the H antigen which is an essential substrate for the final step in the soluble ABO blood group antigen synthesis pathway. This chain is Galactoside alpha-(1,2)-fucosyltransferase 2, found in Pongo pygmaeus (Bornean orangutan).